The sequence spans 483 residues: (R)-mandelonitrile beta-glucosyltransferase (483 aa).

Histidine 22 functions as the Proton acceptor in the catalytic mechanism. Residue histidine 22 coordinates an anthocyanidin. Residue aspartate 124 is the Charge relay of the active site. UDP-alpha-D-glucose-binding residues include threonine 146, glutamine 363, histidine 378, tryptophan 381, asparagine 382, serine 383, and glutamate 386. Alanine 401 provides a ligand contact to an anthocyanidin. 2 residues coordinate UDP-alpha-D-glucose: glutamate 402 and glutamine 403.

The protein belongs to the UDP-glycosyltransferase family.

It carries out the reaction (R)-mandelonitrile + UDP-alpha-D-glucose = (R)-prunasin + UDP + H(+). Functionally, involved in the biosynthesis of the cyanogenic glycoside (R)-prunasin, a precursor of (R)-amygdalin, which at high concentrations is associated with intense bitterness in kernels of almond. Stereo-selectively glucosylates (R)-mandelonitrile to produce (R)-prunasin. The chain is (R)-mandelonitrile beta-glucosyltransferase from Prunus dulcis (Almond).